A 428-amino-acid chain; its full sequence is D-alanine--D-alanine ligase (428 aa).

An ATP-grasp domain is found at 205–424 (KVVLDAAGIP…YTELITRLIE (220 aa)). ATP is bound at residue 237–299 (DAGLTYPLFV…EQGIDGREIE (63 aa)). Mg(2+) contacts are provided by Asp378, Glu391, and Asn393.

The protein belongs to the D-alanine--D-alanine ligase family. The cofactor is Mg(2+). Mn(2+) is required as a cofactor.

Its subcellular location is the cytoplasm. It carries out the reaction 2 D-alanine + ATP = D-alanyl-D-alanine + ADP + phosphate + H(+). It participates in cell wall biogenesis; peptidoglycan biosynthesis. Its function is as follows. Cell wall formation. The sequence is that of D-alanine--D-alanine ligase from Bifidobacterium longum (strain NCC 2705).